We begin with the raw amino-acid sequence, 35 residues long: Peptide ToHyp2 (35 aa).

Residues 1-29 (LPKPPLLPPPVPGLAPGLPPLPVPDPVPH) show a composition bias toward pro residues. The disordered stretch occupies residues 1–35 (LPKPPLLPPPVPGLAPGLPPLPVPDPVPHPPKKPP). Hydroxyproline is present on residues Pro-5, Pro-9, Pro-10, Pro-12, Pro-16, Pro-20, Pro-31, and Pro-35.

In terms of processing, O-glycosylated; contains pentose side chains at some or all of the hydroxyproline residues. Glycosylation is required for full antifungal activity.

In terms of biological role, antimicrobial peptide. Inhibits elongation of hyphae in B.sorokiniana (IC(50)=3.8 uM) but has no effect on this process or on germination of conidia in a panel of other phytopathogenic fungi. At concentrations above 10 uM, has antibacterial activity. This chain is Peptide ToHyp2, found in Taraxacum officinale (Common dandelion).